We begin with the raw amino-acid sequence, 285 residues long: Ribosomal RNA small subunit methyltransferase A (285 aa).

S-adenosyl-L-methionine is bound by residues N21, L23, G48, E69, D94, and N127.

Belongs to the class I-like SAM-binding methyltransferase superfamily. rRNA adenine N(6)-methyltransferase family. RsmA subfamily.

The protein localises to the cytoplasm. The catalysed reaction is adenosine(1518)/adenosine(1519) in 16S rRNA + 4 S-adenosyl-L-methionine = N(6)-dimethyladenosine(1518)/N(6)-dimethyladenosine(1519) in 16S rRNA + 4 S-adenosyl-L-homocysteine + 4 H(+). In terms of biological role, specifically dimethylates two adjacent adenosines (A1518 and A1519) in the loop of a conserved hairpin near the 3'-end of 16S rRNA in the 30S particle. May play a critical role in biogenesis of 30S subunits. The protein is Ribosomal RNA small subunit methyltransferase A of Koribacter versatilis (strain Ellin345).